The sequence spans 468 residues: Phosphoglucosamine mutase (468 aa).

Catalysis depends on S112, which acts as the Phosphoserine intermediate. Residues S112, D254, D256, and D258 each contribute to the Mg(2+) site. At S112 the chain carries Phosphoserine.

It belongs to the phosphohexose mutase family. Mg(2+) is required as a cofactor. Activated by phosphorylation.

The catalysed reaction is alpha-D-glucosamine 1-phosphate = D-glucosamine 6-phosphate. Functionally, catalyzes the conversion of glucosamine-6-phosphate to glucosamine-1-phosphate. This Prochlorococcus marinus (strain MIT 9313) protein is Phosphoglucosamine mutase.